We begin with the raw amino-acid sequence, 367 residues long: MQVLVALAALSSLAAPVVGFSIPRGVPVSQSMIDVKLSSAGNSMVKATITNNGDRALNLLKFHTIMDSNPTRKVSIESQDGKEVQFTGMMPRYKNTDLKPTYFMSLPPKGTVEHSFDIAATHDLSRGGQFTLKAEGMVPIAEENSTNITGAAQYHSNELHMTIDGDQAASVKSAIGVAKRDGPFTRIDKRTKIDMQSCGNRQELQALTAALSASAKLSSMSAQAVGQNQQKYMEYFKDPKYAKTVQSRFQAVAKESSSTNNGGTTYFCSDVMGGCEEGVLAYTLPSRNQVYNCPIYYSELPPLTKECHAQDQATTTLHELTHNPAVQEPFCEDNGYGYERATALSAEKAVQNADSYALFANAVYVGC.

The signal sequence occupies residues 1–19; the sequence is MQVLVALAALSSLAAPVVG. Residues 20-190 constitute a propeptide that is removed on maturation; the sequence is FSIPRGVPVS…DGPFTRIDKR (171 aa). 3 disulfides stabilise this stretch: Cys198/Cys268, Cys275/Cys293, and Cys307/Cys367. His318 contributes to the Zn(2+) binding site. The active site involves Glu319. Zn(2+)-binding residues include His322 and Asp333.

This sequence belongs to the peptidase M35 family. Zn(2+) serves as cofactor.

The protein localises to the secreted. It carries out the reaction Preferential cleavage of bonds with hydrophobic residues in P1'. Also 3-Asn-|-Gln-4 and 8-Gly-|-Ser-9 bonds in insulin B chain.. Its function is as follows. Probable secreted metalloprotease that shows high activities on basic nuclear substrates such as histone and protamine. May be involved in virulence. The polypeptide is Probable neutral protease 2 homolog MCYG_00239 (Arthroderma otae (strain ATCC MYA-4605 / CBS 113480) (Microsporum canis)).